The following is a 466-amino-acid chain: Probable Xaa-Pro aminopeptidase pepP (466 aa).

4 residues coordinate Mn(2+): aspartate 264, aspartate 275, glutamate 398, and glutamate 438.

The protein belongs to the peptidase M24B family. Mn(2+) serves as cofactor.

The enzyme catalyses Release of any N-terminal amino acid, including proline, that is linked to proline, even from a dipeptide or tripeptide.. In terms of biological role, catalyzes the removal of a penultimate prolyl residue from the N-termini of peptides. The chain is Probable Xaa-Pro aminopeptidase pepP (pepP) from Aspergillus niger (strain ATCC MYA-4892 / CBS 513.88 / FGSC A1513).